A 310-amino-acid chain; its full sequence is Deoxyribonuclease gamma (310 aa).

Positions methionine 1 to alanine 25 are cleaved as a signal peptide. Positions lysine 40–arginine 56 match the Bipartite nuclear localization signal motif. Residues glutamate 105 and histidine 160 contribute to the active site. Residues cysteine 199 and cysteine 236 are joined by a disulfide bond. The not required for free DNA-nuclease activity but required for activity towards liposome-coated DNA stretch occupies residues serine 289–serine 310. The Nuclear localization signal motif lies at leucine 301–glycine 307.

It belongs to the DNase I family. Ca(2+) is required as a cofactor. Requires Mg(2+) as cofactor. Poly-ADP-ribosylated by PARP1. ADP-ribosylation negatively regulates enzymatic activity during apoptosis. In terms of tissue distribution, expressed at high levels in liver, spleen and testes. Expressed at lower levels in heart, lungs, skeletal muscle and kidney. Not expressed in brain. Predominantly expressed in macrophages; at protein level. Secreted by mononuclear phagocytes.

The protein localises to the nucleus. The protein resides in the endoplasmic reticulum. It localises to the secreted. Inhibited by zinc. Inhibited by heparin and proteolysis by plasmin. Its function is as follows. Has DNA hydrolytic activity. Is capable of both single- and double-stranded DNA cleavage, producing DNA fragments with 3'-OH ends. Can cleave chromatin to nucleosomal units and cleaves nucleosomal and liposome-coated DNA. Acts in internucleosomal DNA fragmentation (INDF) during apoptosis and necrosis. The role in apoptosis includes myogenic and neuronal differentiation, and BCR-mediated clonal deletion of self-reactive B cells. Is active on chromatin in apoptotic cell-derived membrane-coated microparticles and thus suppresses anti-DNA autoimmunity. Together with DNASE1, plays a key role in degrading neutrophil extracellular traps (NETs). NETs are mainly composed of DNA fibers and are released by neutrophils to bind pathogens during inflammation. Degradation of intravascular NETs by DNASE1 and DNASE1L3 is required to prevent formation of clots that obstruct blood vessels and cause organ damage following inflammation. The sequence is that of Deoxyribonuclease gamma from Mus musculus (Mouse).